The following is a 60-amino-acid chain: MAVQQNKKSPSKRGMHRSHDALTNPPLAIEPTTGEIHLRHHISPNGYYRGKKVIKTKNDD.

Residues 1–43 (MAVQQNKKSPSKRGMHRSHDALTNPPLAIEPTTGEIHLRHHIS) form a disordered region.

Belongs to the bacterial ribosomal protein bL32 family.

In Nitrosomonas europaea (strain ATCC 19718 / CIP 103999 / KCTC 2705 / NBRC 14298), this protein is Large ribosomal subunit protein bL32.